Reading from the N-terminus, the 749-residue chain is Catalase-peroxidase (749 aa).

A cross-link (tryptophyl-tyrosyl-methioninium (Trp-Tyr) (with M-260)) is located at residues 98–234; that stretch reads WHAAGTYRVQ…LAASHMGLIY (137 aa). The active-site Proton acceptor is the H99. Positions 234 to 260 form a cross-link, tryptophyl-tyrosyl-methioninium (Tyr-Met) (with W-98); sequence YVNPEGPNGEPDPVAAAHDIRTTFGRM. H275 provides a ligand contact to heme b.

The protein belongs to the peroxidase family. Peroxidase/catalase subfamily. As to quaternary structure, homodimer or homotetramer. Heme b serves as cofactor. Post-translationally, formation of the three residue Trp-Tyr-Met cross-link is important for the catalase, but not the peroxidase activity of the enzyme.

Its subcellular location is the cytoplasm. The enzyme catalyses H2O2 + AH2 = A + 2 H2O. It carries out the reaction 2 H2O2 = O2 + 2 H2O. In terms of biological role, bifunctional enzyme with both catalase and broad-spectrum peroxidase activity. This chain is Catalase-peroxidase, found in Mycosarcoma maydis (Corn smut fungus).